The primary structure comprises 77 residues: U8-lycotoxin-Ls1f (77 aa).

Residues 1–20 (MKLIIFTGLVLFAIVSLIEV) form the signal peptide. A propeptide spanning residues 21–26 (QADNER) is cleaved from the precursor.

It belongs to the neurotoxin 19 (CSTX) family. 08 (U8-Lctx) subfamily. In terms of processing, contains 4 disulfide bonds. In terms of tissue distribution, expressed by the venom gland.

The protein localises to the secreted. This chain is U8-lycotoxin-Ls1f, found in Lycosa singoriensis (Wolf spider).